Here is a 77-residue protein sequence, read N- to C-terminus: Small integral membrane protein 5 (77 aa).

The chain crosses the membrane as a helical span at residues 32-52; the sequence is IVAFSVIILFTATVLLLLLIA.

It localises to the membrane. In Homo sapiens (Human), this protein is Small integral membrane protein 5 (SMIM5).